A 525-amino-acid chain; its full sequence is Hydroxyneurosporene desaturase (525 aa).

The protein belongs to the carotenoid/retinoid oxidoreductase family.

It carries out the reaction rhodopin + A = (3E)-3,4-didehydrorhodopin + AH2. It participates in carotenoid biosynthesis; spheroidene biosynthesis. Functionally, catalyzes the introduction of C-3,4 double bonds into 1-hydroxyneurosporene (1-HO-Neu) to yield demethylspheroidene (DMS). The preferred substrates are 1-hydroxy-neurosporene, 1-hydroxy-lycopene and 1,1-dihydroxyneurosporene, however the 3,4-didehydrolycopene derivatives such as 1,1-dihydroxy-3,4-didehydrolycopene, 1-methoxy-1-hydroxy-3,4-didehydrolycopene and 1-hydroxy-3,4-didehydrolycopene are also efficiently converted. 1-HO-carotene derivatives can be also used. This Rubrivivax gelatinosus (Rhodocyclus gelatinosus) protein is Hydroxyneurosporene desaturase (crtD).